The primary structure comprises 463 residues: 23S rRNA (uracil(1939)-C(5))-methyltransferase RlmD (463 aa).

The region spanning 6 to 76 is the TRAM domain; the sequence is KSRKPQQPEY…KRLEEAEMVA (71 aa). Cys90, Cys96, Cys99, and Cys178 together coordinate [4Fe-4S] cluster. Positions 288, 317, 322, 341, 368, and 389 each coordinate S-adenosyl-L-methionine. Residue Cys415 is the Nucleophile of the active site.

It belongs to the class I-like SAM-binding methyltransferase superfamily. RNA M5U methyltransferase family. RlmD subfamily.

It carries out the reaction uridine(1939) in 23S rRNA + S-adenosyl-L-methionine = 5-methyluridine(1939) in 23S rRNA + S-adenosyl-L-homocysteine + H(+). In terms of biological role, catalyzes the formation of 5-methyl-uridine at position 1939 (m5U1939) in 23S rRNA. The protein is 23S rRNA (uracil(1939)-C(5))-methyltransferase RlmD of Acinetobacter baumannii (strain SDF).